A 198-amino-acid polypeptide reads, in one-letter code: Autophagy-related protein 33 (198 aa).

Helical transmembrane passes span 17 to 37 (VSLGLLTGVSYSISSLALPAL), 60 to 80 (PVLALTSLASAPFLISFFLAP), and 86 to 106 (PYLLYTAILATLSSVAPILIP). Positions 111–147 (APRRTASSAPRKSSRAKMEASYEVLGDAHSEPASDED) are disordered. Positions 112-121 (PRRTASSAPR) are enriched in low complexity. A compositionally biased stretch (basic and acidic residues) spans 126–142 (AKMEASYEVLGDAHSEP). The helical transmembrane segment at 171–191 (TAISALGFAMAVVGIWGDGAP) threads the bilayer.

This sequence belongs to the ATG33 family.

The protein localises to the mitochondrion membrane. Functionally, involved in the selective degradation of mitochondria via autophagy during starvation and at post-log phase. Autophagy is required for proper vegetative growth, asexual/sexual reproduction, and full virulence. Autophagy is particularly involved in the biosynthesis of deoxynivalenol (DON), an important virulence determinant. This Gibberella zeae (strain ATCC MYA-4620 / CBS 123657 / FGSC 9075 / NRRL 31084 / PH-1) (Wheat head blight fungus) protein is Autophagy-related protein 33.